We begin with the raw amino-acid sequence, 120 residues long: Large ribosomal subunit protein bL19 (120 aa).

This sequence belongs to the bacterial ribosomal protein bL19 family.

Functionally, this protein is located at the 30S-50S ribosomal subunit interface and may play a role in the structure and function of the aminoacyl-tRNA binding site. The sequence is that of Large ribosomal subunit protein bL19 from Thermosynechococcus vestitus (strain NIES-2133 / IAM M-273 / BP-1).